A 273-amino-acid polypeptide reads, in one-letter code: 4-hydroxy-tetrahydrodipicolinate reductase (273 aa).

12–17 (GANGRM) lines the NAD(+) pocket. Residue R39 coordinates NADP(+). NAD(+) contacts are provided by residues 102 to 104 (GTT) and 126 to 129 (AANF). H159 functions as the Proton donor/acceptor in the catalytic mechanism. H160 serves as a coordination point for (S)-2,3,4,5-tetrahydrodipicolinate. K163 (proton donor) is an active-site residue. 169 to 170 (GT) is a (S)-2,3,4,5-tetrahydrodipicolinate binding site.

It belongs to the DapB family. In terms of assembly, homotetramer.

The protein localises to the cytoplasm. It carries out the reaction (S)-2,3,4,5-tetrahydrodipicolinate + NAD(+) + H2O = (2S,4S)-4-hydroxy-2,3,4,5-tetrahydrodipicolinate + NADH + H(+). The catalysed reaction is (S)-2,3,4,5-tetrahydrodipicolinate + NADP(+) + H2O = (2S,4S)-4-hydroxy-2,3,4,5-tetrahydrodipicolinate + NADPH + H(+). It participates in amino-acid biosynthesis; L-lysine biosynthesis via DAP pathway; (S)-tetrahydrodipicolinate from L-aspartate: step 4/4. Catalyzes the conversion of 4-hydroxy-tetrahydrodipicolinate (HTPA) to tetrahydrodipicolinate. The polypeptide is 4-hydroxy-tetrahydrodipicolinate reductase (Cronobacter sakazakii (strain ATCC BAA-894) (Enterobacter sakazakii)).